Consider the following 96-residue polypeptide: Plasminogen-like protein A (96 aa).

A signal peptide spans 1–19; that stretch reads MEHKEVVLLLLLFLKSGQG. Residues 20-96 form the PAN domain; that stretch reads EPLDDYVNAQ…RMRDVVLFEK (77 aa). Disulfide bonds link Cys49–Cys73 and Cys53–Cys61.

In terms of tissue distribution, expressed in liver.

The protein localises to the secreted. May bind non-covalently to lysine binding sites present in the kringle structures of plasminogen. This may interfere with the binding of fibrin or alpha-2-antiplasmin to plasminogen and may result in the localization of activity at sites necessary for extracellular matrix destruction. The polypeptide is Plasminogen-like protein A (PLGLA) (Homo sapiens (Human)).